The following is a 146-amino-acid chain: Lysozyme C (146 aa).

The N-terminal stretch at 1 to 16 (SGKYISWEDSCSYLQL) is a signal peptide. Residues 17-146 (QKYERCELAK…LSQWTQGCKL (130 aa)) enclose the C-type lysozyme domain. 4 cysteine pairs are disulfide-bonded: C22/C144, C46/C132, C81/C97, and C93/C111. Active-site residues include E51 and D69.

The protein belongs to the glycosyl hydrolase 22 family. As to expression, expressed by the skin glands.

It localises to the secreted. It carries out the reaction Hydrolysis of (1-&gt;4)-beta-linkages between N-acetylmuramic acid and N-acetyl-D-glucosamine residues in a peptidoglycan and between N-acetyl-D-glucosamine residues in chitodextrins.. Lysozymes have primarily a bacteriolytic function; those in tissues and body fluids are associated with the monocyte-macrophage system and enhance the activity of immunoagents. Has antibacterial activity against the Gram-positive bacterium S.aureus and against the Gram-negative bacterium E.coli with a MIC of 1 uM and 8 uM respectively. No antifungal activity against C.albicans. This Bufo gargarizans andrewsi (Andrew's toad) protein is Lysozyme C.